The chain runs to 760 residues: 5-methyltetrahydropteroyltriglutamate--homocysteine methyltransferase (760 aa).

Residues 17-20 (RELK) and K118 contribute to the 5-methyltetrahydropteroyltri-L-glutamate site. L-homocysteine contacts are provided by residues 434-436 (IGS) and E487. Residues 434-436 (IGS) and E487 contribute to the L-methionine site. 5-methyltetrahydropteroyltri-L-glutamate is bound by residues 518–519 (RC) and W564. D602 provides a ligand contact to L-homocysteine. Position 602 (D602) interacts with L-methionine. E608 serves as a coordination point for 5-methyltetrahydropteroyltri-L-glutamate. Zn(2+)-binding residues include H644, C646, and E668. H697 acts as the Proton donor in catalysis. Residue C729 participates in Zn(2+) binding.

This sequence belongs to the vitamin-B12 independent methionine synthase family. It depends on Zn(2+) as a cofactor.

The enzyme catalyses 5-methyltetrahydropteroyltri-L-glutamate + L-homocysteine = tetrahydropteroyltri-L-glutamate + L-methionine. Its pathway is amino-acid biosynthesis; L-methionine biosynthesis via de novo pathway; L-methionine from L-homocysteine (MetE route): step 1/1. Its function is as follows. Catalyzes the transfer of a methyl group from 5-methyltetrahydrofolate to homocysteine resulting in methionine formation. The polypeptide is 5-methyltetrahydropteroyltriglutamate--homocysteine methyltransferase (Buchnera aphidicola subsp. Cinara cedri (strain Cc)).